The sequence spans 210 residues: Outer-membrane lipoprotein carrier protein (210 aa).

The signal sequence occupies residues Met1–Ala22.

This sequence belongs to the LolA family. In terms of assembly, monomer.

The protein resides in the periplasm. Functionally, participates in the translocation of lipoproteins from the inner membrane to the outer membrane. Only forms a complex with a lipoprotein if the residue after the N-terminal Cys is not an aspartate (The Asp acts as a targeting signal to indicate that the lipoprotein should stay in the inner membrane). In Chromohalobacter salexigens (strain ATCC BAA-138 / DSM 3043 / CIP 106854 / NCIMB 13768 / 1H11), this protein is Outer-membrane lipoprotein carrier protein.